A 765-amino-acid chain; its full sequence is Protein O-mannosyl-transferase 2 (765 aa).

Positions 1 to 31 (MAASVVKTPKCPRRGSVKDVAQNAPRTAPTS) are disordered. A helical membrane pass occupies residues 35–55 (ANWNWWLLLATVFLVTFATRF). 3 N-linked (GlcNAc...) asparagine glycosylation sites follow: Asn-80, Asn-106, and Asn-119. Helical transmembrane passes span 128 to 148 (YFCTTLGALIMPMGFDTVYDL), 175 to 195 (ILLDPILLFFMMASVWGMVKV), 206 to 226 (GLRWWLWLFLTGTMLSCTISV), 228 to 248 (FVGLFVVLLVGLHTATELWLI), and 268 to 288 (ITLIVWPVLLYILFFYIHLSV). N-linked (GlcNAc...) asparagine glycans are attached at residues Asn-290 and Asn-314. MIR domains are found at residues 318–374 (PRDV…IRPH), 384–440 (VQIL…VLIV), and 445–501 (NETV…VEDN). Residue Asn-445 is glycosylated (N-linked (GlcNAc...) asparagine). 4 helical membrane passes run 566-586 (IYLLGNPLIWWSNLVFLALFV), 667-687 (LFLGWMLHYLPFWAMGRVLYF), 689-709 (HYFPALIFNSLLTGVMYNYIL), and 719-739 (VILGLVLSILVYSFAAFSPLA). Asn-751 carries an N-linked (GlcNAc...) asparagine glycan.

The protein belongs to the glycosyltransferase 39 family. As to quaternary structure, interacts with Rt/POMT1. As to expression, at the cellular blastoderm stage, expression accumulates in the ventrally located mesoderm primordium. At germ band extension, mesoderm expression is seen as stripes of strong expression. A very strong signal is also detected in the invaginating gut. As the germ band retracts, mesodermal expression decays and becomes restricted to somatic muscle precursors.

It localises to the endoplasmic reticulum membrane. It catalyses the reaction a di-trans,poly-cis-dolichyl beta-D-mannosyl phosphate + L-seryl-[protein] = 3-O-(alpha-D-mannosyl)-L-seryl-[protein] + a di-trans,poly-cis-dolichyl phosphate + H(+). It carries out the reaction a di-trans,poly-cis-dolichyl beta-D-mannosyl phosphate + L-threonyl-[protein] = 3-O-(alpha-D-mannosyl)-L-threonyl-[protein] + a di-trans,poly-cis-dolichyl phosphate + H(+). It functions in the pathway protein modification; protein glycosylation. Its function is as follows. Rt/POMT1 and tw/POMT2 function as a protein O-mannosyltransferase in association with each other to generate and maintain normal muscle development. In Drosophila melanogaster (Fruit fly), this protein is Protein O-mannosyl-transferase 2 (tw).